A 44-amino-acid polypeptide reads, in one-letter code: Cytochrome b559 subunit beta (44 aa).

Residues tryptophan 19–serine 35 form a helical membrane-spanning segment. Residue histidine 23 participates in heme binding.

This sequence belongs to the PsbE/PsbF family. As to quaternary structure, heterodimer of an alpha subunit and a beta subunit. PSII is composed of 1 copy each of membrane proteins PsbA, PsbB, PsbC, PsbD, PsbE, PsbF, PsbH, PsbI, PsbJ, PsbK, PsbL, PsbM, PsbT, PsbX, PsbY, PsbZ, Psb30/Ycf12, at least 3 peripheral proteins of the oxygen-evolving complex and a large number of cofactors. It forms dimeric complexes. Heme b is required as a cofactor.

The protein resides in the plastid. Its subcellular location is the chloroplast thylakoid membrane. Functionally, this b-type cytochrome is tightly associated with the reaction center of photosystem II (PSII). PSII is a light-driven water:plastoquinone oxidoreductase that uses light energy to abstract electrons from H(2)O, generating O(2) and a proton gradient subsequently used for ATP formation. It consists of a core antenna complex that captures photons, and an electron transfer chain that converts photonic excitation into a charge separation. This chain is Cytochrome b559 subunit beta, found in Chlamydomonas moewusii (Chlamydomonas eugametos).